The chain runs to 159 residues: 2-C-methyl-D-erythritol 2,4-cyclodiphosphate synthase (159 aa).

Positions 11 and 13 each coordinate a divalent metal cation. 4-CDP-2-C-methyl-D-erythritol 2-phosphate contacts are provided by residues 11-13 (DVH) and 37-38 (HS). An a divalent metal cation-binding site is contributed by His45. Residues 59–61 (DIG) and 64–68 (FPDSD) contribute to the 4-CDP-2-C-methyl-D-erythritol 2-phosphate site.

Belongs to the IspF family. In terms of assembly, homotrimer. A divalent metal cation is required as a cofactor.

It catalyses the reaction 4-CDP-2-C-methyl-D-erythritol 2-phosphate = 2-C-methyl-D-erythritol 2,4-cyclic diphosphate + CMP. It participates in isoprenoid biosynthesis; isopentenyl diphosphate biosynthesis via DXP pathway; isopentenyl diphosphate from 1-deoxy-D-xylulose 5-phosphate: step 4/6. Involved in the biosynthesis of isopentenyl diphosphate (IPP) and dimethylallyl diphosphate (DMAPP), two major building blocks of isoprenoid compounds. Catalyzes the conversion of 4-diphosphocytidyl-2-C-methyl-D-erythritol 2-phosphate (CDP-ME2P) to 2-C-methyl-D-erythritol 2,4-cyclodiphosphate (ME-CPP) with a corresponding release of cytidine 5-monophosphate (CMP). This is 2-C-methyl-D-erythritol 2,4-cyclodiphosphate synthase from Solibacter usitatus (strain Ellin6076).